The primary structure comprises 1626 residues: RNA2 polyprotein (1626 aa).

2 disordered regions span residues 84–107 (KHSK…ARAA) and 1042–1066 (GRSN…RDAP). Residues 92–104 (PNGSVTTKRSNSA) are compositionally biased toward polar residues.

This sequence belongs to the nepoviruses RNA2 polyprotein family. In terms of processing, specific enzymatic cleavages in vivo by the P1 encoded 3C-like protease yield mature proteins.

The protein localises to the host cell junction. It is found in the host plasmodesma. Its subcellular location is the virion. In terms of biological role, implicated in RNA2 replication. Could also be required for nematode transmission of the virus. Transports viral genome to neighboring plant cells directly through plasmosdesmata, without any budding. The movement protein allows efficient cell to cell propagation, by bypassing the host cell wall barrier. Acts by forming a tubular structure at the host plasmodesmata, enlarging it enough to allow free passage of virion capsids. In Blackcurrant reversion association virus (BRAV), this protein is RNA2 polyprotein.